Consider the following 266-residue polypeptide: Expansin-A13 (266 aa).

A signal peptide spans 1-19; that stretch reads MQRFLLPLLFLALSPPAIC. One can recognise an Expansin-like EG45 domain in the interval 58–171; the sequence is GGACGYGDLV…RRINCRKEGS (114 aa). The Expansin-like CBD domain maps to 181–260; sequence IFISVLITNV…NWNYGQTFEG (80 aa).

It belongs to the expansin family. Expansin A subfamily.

The protein resides in the secreted. The protein localises to the cell wall. Its subcellular location is the membrane. Functionally, causes loosening and extension of plant cell walls by disrupting non-covalent bonding between cellulose microfibrils and matrix glucans. No enzymatic activity has been found. In Arabidopsis thaliana (Mouse-ear cress), this protein is Expansin-A13 (EXPA13).